Consider the following 203-residue polypeptide: Endothelin-1 (203 aa).

The signal sequence occupies residues 1–25 (MDYFPMIIALLFVAFQGAPETAVLG). A propeptide spanning residues 26 to 50 (AELSPEAESQGETPSPHASWRPRRS) is cleaved from the precursor. Residues 27 to 48 (ELSPEAESQGETPSPHASWRPR) are disordered. 2 disulfides stabilise this stretch: cysteine 53–cysteine 67 and cysteine 55–cysteine 63. Positions 83–203 (YGLGSPSRSR…DKKVTHNRTH (121 aa)) are excised as a propeptide. Positions 110–124 (CQCASQKDKKCWSFC) are endothelin-like. A glycan (N-linked (GlcNAc...) asparagine) is linked at asparagine 200.

It belongs to the endothelin/sarafotoxin family.

It localises to the secreted. In terms of biological role, endothelins are endothelium-derived vasoconstrictor peptides. Probable ligand for G-protein coupled receptors EDNRA and EDNRB which activates PTK2B, BCAR1, BCAR3 and, GTPases RAP1 and RHOA cascade in glomerular mesangial cells. Also binds the DEAR/FBXW7-AS1 receptor. Promotes mesenteric arterial wall remodeling via activation of ROCK signaling and subsequent colocalization of NFATC3 with F-actin filaments. NFATC3 then translocates to the nucleus where it subsequently promotes the transcription of the smooth muscle hypertrophy and differentiation marker ACTA2. The protein is Endothelin-1 (EDN1) of Sus scrofa (Pig).